Here is a 120-residue protein sequence, read N- to C-terminus: Large ribosomal subunit protein uL18 (120 aa).

This sequence belongs to the universal ribosomal protein uL18 family. In terms of assembly, part of the 50S ribosomal subunit; part of the 5S rRNA/L5/L18/L25 subcomplex. Contacts the 5S and 23S rRNAs.

This is one of the proteins that bind and probably mediate the attachment of the 5S RNA into the large ribosomal subunit, where it forms part of the central protuberance. The protein is Large ribosomal subunit protein uL18 of Treponema pallidum (strain Nichols).